A 464-amino-acid polypeptide reads, in one-letter code: MGKRLLDKLWERHVVATNENGLDLLYIDLHLVHEVTSPQAFEGLRLTNRTVRRPDLTFATMDHNIPTKDVWNITDRIAKQQLDTLRENCKQFQVPLADIGDEEQGIVHVIGPELGLTQPGKTIVCGDSHTATHGAFGALAFGIGTSEVEHVLATQTLWQRKPKAMGIELKGKLQKGVYAKDIILHLLSKYGVAVGTGYVMEFYGETIQAMEMEERMTLCNMAIEGGAKAGIIAPDEKTVAYVKGRKYAPRDYETFEKKWFELYTDADAIYDLHISIDVTDLAPYVTWGTNPSMGVRIDEKLPEKHDVNDERAFSYMGLSPGQSTYDIPVQHVFIGSCTNSRLSDLEIAAAVVKGRKVKEGVRALVVPGSKRVRDAAMQKGLHHIFEEAGFEWREPGCSMCLGMNPDQVPEGEHCASTSNRNFEGRQGKGARTHLVSPAMAAAAALYGHFVDTRKESYDGAISYS.

[4Fe-4S] cluster contacts are provided by Cys337, Cys397, and Cys400.

Belongs to the aconitase/IPM isomerase family. LeuC type 1 subfamily. As to quaternary structure, heterodimer of LeuC and LeuD. [4Fe-4S] cluster is required as a cofactor.

The enzyme catalyses (2R,3S)-3-isopropylmalate = (2S)-2-isopropylmalate. The protein operates within amino-acid biosynthesis; L-leucine biosynthesis; L-leucine from 3-methyl-2-oxobutanoate: step 2/4. Its function is as follows. Catalyzes the isomerization between 2-isopropylmalate and 3-isopropylmalate, via the formation of 2-isopropylmaleate. The chain is 3-isopropylmalate dehydratase large subunit from Bacillus cereus (strain AH187).